Consider the following 365-residue polypeptide: DNA replication and repair protein RecF (365 aa).

30-37 is a binding site for ATP; the sequence is GDNGEGKT.

Belongs to the RecF family.

The protein resides in the cytoplasm. Its function is as follows. The RecF protein is involved in DNA metabolism; it is required for DNA replication and normal SOS inducibility. RecF binds preferentially to single-stranded, linear DNA. It also seems to bind ATP. The polypeptide is DNA replication and repair protein RecF (Leptospira borgpetersenii serovar Hardjo-bovis (strain JB197)).